The primary structure comprises 128 residues: MPREFFRSDRIADAIQRSLARVIQTEVRDPRLGLVNINSVDVTRDLSIAKVYVTVVGAKEESESEVAVKVLNKAAGFLRNVIAKELTMRSAPRLSFFYDRTAVQGQNLSNLIDRAVAADKQRSEDEGE.

It belongs to the RbfA family. Monomer. Binds 30S ribosomal subunits, but not 50S ribosomal subunits or 70S ribosomes.

The protein localises to the cytoplasm. In terms of biological role, one of several proteins that assist in the late maturation steps of the functional core of the 30S ribosomal subunit. Associates with free 30S ribosomal subunits (but not with 30S subunits that are part of 70S ribosomes or polysomes). Required for efficient processing of 16S rRNA. May interact with the 5'-terminal helix region of 16S rRNA. The polypeptide is Ribosome-binding factor A (Saccharophagus degradans (strain 2-40 / ATCC 43961 / DSM 17024)).